The chain runs to 1063 residues: MDTASVTGGEHKGKEKTCRVCGEEVAAREDGKPFVACAECGFPVCKPCYEYERSEGTQCCPQCNTRYKRHKGCPRVEGDEDDGGDMDDFEEEFQIKSPTKQKPPHEPVNFDVYSENGEQPAQKWRPGGPALSSFTGSVAGKDLEQEREMEGGMEWKDRIDKWKTKQEKRGKLNRDDSDDDDDKNDDEYMLLAEARQPLWRKVPIPSSKINPYRIVIVLRLVVLCFFLKFRITTPAMDAVPLWLASVICELWFALSWILDQLPKWSPVTRETYLDRLALRYERDGEPCRLAPIDFFVSTVDPLKEPPIITANTVLSILAVDYPVDRVSCYVSDDGASMLLFDTLSETAEFARRWVPFCKKFTIEPRAPEFYFSQKIDYLKDKVQPTFVKERRAMKREYEEFKVRINALVAKAQKKPEEGWVMQDGTPWPGNNTRDHPGMIQVYLGSQGALDVEGSELPRLVYVSREKRPGYNHHKKAGAMNSLVRVSAVLTNAPFILNLDCDHYVNNSKAVREAMCFLMDKQLGKKLCYVQFPQRFDGIDRHDRYANRNTVFFDINMKGLDGIQGPVYVGTGTVFNRQALYGYDPPRPEKRPKMTCDCWPSWCCCCCCFGGGKRGKSHKNKKGGGGGEGGGLDEPRRGLLGFYKKRSKKDKLGGGAASLAGGKKGYRKHQRGFELEEIEEGLEGYDELERSSLMSQKSFEKRFGQSPVFIASTLVEDGGLPQGAAADPAALIKEAIHVISCGYEEKTEWGKEIGWIYGSVTEDILTGFKMHCRGWKSVYCTPARAAFKGSAPINLSDRLHQVLRWALGSVEIFMSRHCPLWYAYGGRLKWLERFAYTNTIVYPFTSIPLLAYCTIPAVCLLTGKFIIPTLNNLASIWFIALFLSIIATGVLELRWSGVSIEDWWRNEQFWVIGGVSAHLFAVFQGLLKVLGGVDTNFTVTSKAAADETDAFGELYLFKWTTLLVPPTTLIIINMVGIVAGVSDAVNNGYGSWGPLFGKLFFSFWVILHLYPFLKGLMGRQNRTPTIVVLWSILLASIFSLVWVRIDPFIPKPKGPVLKPCGVSC.

Over 1–213 the chain is Cytoplasmic; the sequence is MDTASVTGGE…IPSSKINPYR (213 aa). 8 residues coordinate Zn(2+): Cys-18, Cys-21, Cys-37, Cys-40, Cys-45, Cys-48, Cys-60, and Cys-63. The RING-type; degenerate zinc-finger motif lies at 18–64; that stretch reads CRVCGEEVAAREDGKPFVACAECGFPVCKPCYEYERSEGTQCCPQCN. The interval 116 to 154 is disordered; sequence NGEQPAQKWRPGGPALSSFTGSVAGKDLEQEREMEGGME. Residues 141–154 show a composition bias toward basic and acidic residues; it reads KDLEQEREMEGGME. A helical membrane pass occupies residues 214 to 234; sequence IVIVLRLVVLCFFLKFRITTP. Residues 235 to 237 are Extracellular-facing; the sequence is AMD. A helical membrane pass occupies residues 238 to 258; sequence AVPLWLASVICELWFALSWIL. The Cytoplasmic segment spans residues 259–845; that stretch reads DQLPKWSPVT…TNTIVYPFTS (587 aa). The UDP-alpha-D-glucose site is built by Ser-297, Lys-303, Glu-304, and Asp-333. Asp-333 is an active-site residue. The stretch at 387–414 forms a coiled coil; that stretch reads VKERRAMKREYEEFKVRINALVAKAQKK. Lys-474 lines the UDP-alpha-D-glucose pocket. The Mn(2+) site is built by Lys-475 and Asp-499. Residue Asp-762 is part of the active site. A helical membrane pass occupies residues 846 to 866; it reads IPLLAYCTIPAVCLLTGKFII. Over 867–871 the chain is Extracellular; it reads PTLNN. A helical transmembrane segment spans residues 872–892; it reads LASIWFIALFLSIIATGVLEL. At 893–907 the chain is on the cytoplasmic side; it reads RWSGVSIEDWWRNEQ. A helical membrane pass occupies residues 908 to 928; that stretch reads FWVIGGVSAHLFAVFQGLLKV. Residues 929 to 959 are Extracellular-facing; sequence LGGVDTNFTVTSKAAADETDAFGELYLFKWT. N-linked (GlcNAc...) asparagine glycosylation occurs at Asn-935. Residues 960–980 traverse the membrane as a helical segment; it reads TLLVPPTTLIIINMVGIVAGV. At 981–991 the chain is on the cytoplasmic side; that stretch reads SDAVNNGYGSW. A helical membrane pass occupies residues 992 to 1012; it reads GPLFGKLFFSFWVILHLYPFL. At 1013–1021 the chain is on the extracellular side; it reads KGLMGRQNR. The helical transmembrane segment at 1022-1042 threads the bilayer; it reads TPTIVVLWSILLASIFSLVWV. At 1043-1063 the chain is on the cytoplasmic side; it reads RIDPFIPKPKGPVLKPCGVSC.

It belongs to the glycosyltransferase 2 family. Plant cellulose synthase subfamily. Mn(2+) serves as cofactor. It depends on Zn(2+) as a cofactor.

It localises to the cell membrane. It carries out the reaction [(1-&gt;4)-beta-D-glucosyl](n) + UDP-alpha-D-glucose = [(1-&gt;4)-beta-D-glucosyl](n+1) + UDP + H(+). The protein operates within glycan metabolism; plant cellulose biosynthesis. Catalytic subunit of cellulose synthase terminal complexes ('rosettes'), required for beta-1,4-glucan microfibril crystallization, a major mechanism of the cell wall formation. Involved in the secondary cell wall formation. The sequence is that of Cellulose synthase A catalytic subunit 7 [UDP-forming] (CESA7) from Oryza sativa subsp. japonica (Rice).